We begin with the raw amino-acid sequence, 180 residues long: ADP-ribosylation factor-like protein 1 (180 aa).

G2 carries the N-myristoyl glycine lipid modification. Residues 23 to 30 (GLDGAGKT), 66 to 70 (DLGGQ), and 125 to 128 (NKQD) each bind GTP.

It belongs to the small GTPase superfamily. Arf family. As to expression, expressed in neuronal cells. Expression in hypodermal tissues is absent.

It localises to the golgi apparatus. The protein localises to the cytoplasm. It is found in the cytoplasmic granule. GTP-binding protein that may be involved in protein trafficking; may modulate vesicle budding and uncoating within the Golgi apparatus. Plays a role in male tail tip morphogenesis. The protein is ADP-ribosylation factor-like protein 1 of Caenorhabditis elegans.